The sequence spans 480 residues: Ftsk domain-containing protein YdcQ (480 aa).

The next 2 membrane-spanning stretches (helical) occupy residues Val25–Trp45 and Ser71–Phe91. The FtsK domain occupies Met217–Gly399. Gly234–Thr241 is an ATP binding site.

It is found in the cell membrane. This is Ftsk domain-containing protein YdcQ (ydcQ) from Bacillus subtilis (strain 168).